The sequence spans 225 residues: Ribonuclease 3 (225 aa).

The 123-residue stretch at 5–127 folds into the RNase III domain; it reads IDKLERKLGY…IIGAIYLDSD (123 aa). Residue Glu40 participates in Mg(2+) binding. Asp44 is an active-site residue. Residues Asp113 and Glu116 each contribute to the Mg(2+) site. Glu116 is an active-site residue. Positions 154–224 constitute a DRBM domain; that stretch reads DPKTRLQEFL…AETALEQLTN (71 aa).

It belongs to the ribonuclease III family. As to quaternary structure, homodimer. Mg(2+) is required as a cofactor.

The protein localises to the cytoplasm. It carries out the reaction Endonucleolytic cleavage to 5'-phosphomonoester.. Digests double-stranded RNA. Involved in the processing of primary rRNA transcript to yield the immediate precursors to the large and small rRNAs (23S and 16S). Processes some mRNAs, and tRNAs when they are encoded in the rRNA operon. Processes pre-crRNA and tracrRNA of type II CRISPR loci if present in the organism. This chain is Ribonuclease 3, found in Vibrio campbellii (strain ATCC BAA-1116).